The sequence spans 55 residues: UPF0391 membrane protein RALTA_A0099 (55 aa).

2 helical membrane passes run 5–25 and 30–50; these read ALVF…GIAA and IAKI…VMGL.

The protein belongs to the UPF0391 family.

Its subcellular location is the cell membrane. This is UPF0391 membrane protein RALTA_A0099 from Cupriavidus taiwanensis (strain DSM 17343 / BCRC 17206 / CCUG 44338 / CIP 107171 / LMG 19424 / R1) (Ralstonia taiwanensis (strain LMG 19424)).